The following is a 251-amino-acid chain: Flagellar L-ring protein (251 aa).

Residues 1 to 17 (MIRKLAALIVAAAALQA) form the signal peptide. The N-palmitoyl cysteine moiety is linked to residue C18. C18 carries S-diacylglycerol cysteine lipidation.

It belongs to the FlgH family. The basal body constitutes a major portion of the flagellar organelle and consists of four rings (L,P,S, and M) mounted on a central rod.

It localises to the cell outer membrane. Its subcellular location is the bacterial flagellum basal body. In terms of biological role, assembles around the rod to form the L-ring and probably protects the motor/basal body from shearing forces during rotation. The sequence is that of Flagellar L-ring protein from Maricaulis maris (strain MCS10) (Caulobacter maris).